The following is a 67-amino-acid chain: Beta-defensin 123 (67 aa).

The first 20 residues, 1-20 (MKLLLLTLTVLLLLSQLTPG), serve as a signal peptide directing secretion. Intrachain disulfides connect Cys-25/Cys-52, Cys-32/Cys-46, and Cys-36/Cys-53.

Belongs to the beta-defensin family.

Its subcellular location is the secreted. Its function is as follows. Has antibacterial activity. The protein is Beta-defensin 123 (DEFB123) of Gorilla gorilla gorilla (Western lowland gorilla).